Here is a 691-residue protein sequence, read N- to C-terminus: Elongation factor G (691 aa).

Residues 8–282 enclose the tr-type G domain; sequence ERVRNIGIAA…AVVNYLPAPV (275 aa). Residues 17-24, 81-85, and 135-138 each bind GTP; these read AHIDAGKT, DTPGH, and NKMD.

The protein belongs to the TRAFAC class translation factor GTPase superfamily. Classic translation factor GTPase family. EF-G/EF-2 subfamily.

It is found in the cytoplasm. Functionally, catalyzes the GTP-dependent ribosomal translocation step during translation elongation. During this step, the ribosome changes from the pre-translocational (PRE) to the post-translocational (POST) state as the newly formed A-site-bound peptidyl-tRNA and P-site-bound deacylated tRNA move to the P and E sites, respectively. Catalyzes the coordinated movement of the two tRNA molecules, the mRNA and conformational changes in the ribosome. In Prochlorococcus marinus (strain NATL1A), this protein is Elongation factor G.